An 84-amino-acid polypeptide reads, in one-letter code: Small ribosomal subunit protein bS18A (84 aa).

This sequence belongs to the bacterial ribosomal protein bS18 family. In terms of assembly, part of the 30S ribosomal subunit. Forms a tight heterodimer with protein bS6.

Functionally, binds as a heterodimer with protein bS6 to the central domain of the 16S rRNA, where it helps stabilize the platform of the 30S subunit. This Mycobacterium marinum (strain ATCC BAA-535 / M) protein is Small ribosomal subunit protein bS18A.